Here is a 182-residue protein sequence, read N- to C-terminus: Isopentenyl-diphosphate Delta-isomerase (182 aa).

Residues His25 and His32 each contribute to the Mn(2+) site. Positions Arg30–Met164 constitute a Nudix hydrolase domain. Cys67 is a catalytic residue. His69 is a binding site for Mn(2+). Glu87 contacts Mg(2+). Mn(2+) is bound by residues Glu114 and Glu116. The active site involves Glu116.

This sequence belongs to the IPP isomerase type 1 family. Homodimer. Mg(2+) is required as a cofactor. Requires Mn(2+) as cofactor.

The protein resides in the cytoplasm. It catalyses the reaction isopentenyl diphosphate = dimethylallyl diphosphate. Its pathway is isoprenoid biosynthesis; dimethylallyl diphosphate biosynthesis; dimethylallyl diphosphate from isopentenyl diphosphate: step 1/1. Its function is as follows. Catalyzes the 1,3-allylic rearrangement of the homoallylic substrate isopentenyl (IPP) to its highly electrophilic allylic isomer, dimethylallyl diphosphate (DMAPP). The polypeptide is Isopentenyl-diphosphate Delta-isomerase (Escherichia coli O139:H28 (strain E24377A / ETEC)).